The sequence spans 790 residues: Lon protease (790 aa).

A Lon N-terminal domain is found at 13-209 (LPLFPIRNTV…RLTDHVAKEI (197 aa)). 362 to 369 (GPPGVGKT) is an ATP binding site. Positions 598–779 (DNQVGITIGL…DQVLDIALAT (182 aa)) constitute a Lon proteolytic domain. Active-site residues include Ser685 and Lys728.

The protein belongs to the peptidase S16 family. Homohexamer. Organized in a ring with a central cavity.

The protein localises to the cytoplasm. It catalyses the reaction Hydrolysis of proteins in presence of ATP.. Its function is as follows. ATP-dependent serine protease that mediates the selective degradation of mutant and abnormal proteins as well as certain short-lived regulatory proteins. Required for cellular homeostasis and for survival from DNA damage and developmental changes induced by stress. Degrades polypeptides processively to yield small peptide fragments that are 5 to 10 amino acids long. Binds to DNA in a double-stranded, site-specific manner. The sequence is that of Lon protease from Orientia tsutsugamushi (strain Ikeda) (Rickettsia tsutsugamushi).